The sequence spans 494 residues: Putative glucuronosyltransferase PGSIP7 (494 aa).

Residues 4–24 form a helical membrane-spanning segment; the sequence is QRTLMFSCWVLSLLIIKTTAY. The Mn(2+) site is built by Asp161 and Asp163. A run of 5 helical transmembrane segments spans residues 316–336, 362–382, 389–409, 410–430, and 444–464; these read YSAE…IILV, AFKF…FFII, LIGW…PINA, FLLP…TLLV, and LSVF…FVKI.

Belongs to the glycosyltransferase 8 family. Glycogenin subfamily. Mn(2+) serves as cofactor.

The protein localises to the membrane. This is Putative glucuronosyltransferase PGSIP7 (PGSIP7) from Arabidopsis thaliana (Mouse-ear cress).